A 395-amino-acid polypeptide reads, in one-letter code: Neuromedin-U receptor 2 (395 aa).

At 1 to 41 the chain is on the extracellular side; sequence MGKLENASWIHDSLMKYLNSTEEYLAYLCGPKRSDLSLPVS. Asparagine 6 and asparagine 19 each carry an N-linked (GlcNAc...) asparagine glycan. The chain crosses the membrane as a helical span at residues 42–62; it reads VVYALIFVVGVIGNLLVCLVI. Residues 63–74 lie on the Cytoplasmic side of the membrane; sequence ARHQTLKTPTNY. The chain crosses the membrane as a helical span at residues 75–95; that stretch reads YLFSLAVSDLLVLLLGMPLEV. Topologically, residues 96 to 115 are extracellular; sequence YELWHNYPFLFGPVGCYFKT. A disulfide bond links cysteine 111 and cysteine 196. Residues 116-138 form a helical membrane-spanning segment; that stretch reads ALFETVCFASILSVTTVSIERYV. At 139-157 the chain is on the cytoplasmic side; sequence AIVHPFRAKLESTRRRALR. Residues 158 to 178 traverse the membrane as a helical segment; the sequence is ILSLVWSFSVVFSLPNTSIHG. Residues 179-212 lie on the Extracellular side of the membrane; it reads IKFQQFPNGSSVPGSATCTVTKPIWVYNFIIQAT. An N-linked (GlcNAc...) asparagine glycan is attached at asparagine 186. A helical transmembrane segment spans residues 213-233; sequence SFLFYILPMTLISVLYYLMGL. Over 234 to 257 the chain is Cytoplasmic; sequence RLKRDESLEADKVTVNIHRPSRKS. Residues 258–278 traverse the membrane as a helical segment; the sequence is VTKMLFVLVLVFAICWTPFHV. Over 279–293 the chain is Extracellular; the sequence is DRLFFSFVDEWTESL. Residues 294–314 traverse the membrane as a helical segment; it reads AAVFNLIHVVSGVFFYLSSAV. Over 315–395 the chain is Cytoplasmic; sequence NPIIYNLLSR…TTVPCVEEVP (81 aa).

It belongs to the G-protein coupled receptor 1 family. In terms of tissue distribution, expressed primarily in brain tissues, more specifically in medulla and spinal cord. Widespread distribution in peripheral tissues.

The protein resides in the cell membrane. Its function is as follows. Receptor for the neuromedin-U and neuromedin-S neuropeptides. The protein is Neuromedin-U receptor 2 (Nmur2) of Mus musculus (Mouse).